We begin with the raw amino-acid sequence, 276 residues long: AT-hook motif nuclear-localized protein 17 (276 aa).

A compositionally biased stretch (basic and acidic residues) spans 1 to 10 (MKGEYREQKS). Disordered regions lie at residues 1-80 (MKGE…RDTD) and 212-248 (AEEE…SGGE). Low complexity-rich tracts occupy residues 20 to 31 (HQQQQQQQQQQH) and 40 to 49 (SSTVTPTVDD). Residues 56-68 (RRPRGRPPGSKNK) constitute a DNA-binding region (a.T hook). Residues 80-230 (DPPMSPYILE…GTGEREGQSP (151 aa)) enclose the PPC domain. Positions 212–227 (AEEEQKHSAGTGEREG) are enriched in basic and acidic residues. Gly residues predominate over residues 233–248 (SGGGEESGQMAGSGGE).

Its subcellular location is the nucleus. In terms of biological role, transcription factor that specifically binds AT-rich DNA sequences related to the nuclear matrix attachment regions (MARs). In Arabidopsis thaliana (Mouse-ear cress), this protein is AT-hook motif nuclear-localized protein 17.